The primary structure comprises 362 residues: MNDYTQQLQGKKDYLKTLFAGLDVPEWEVYESPDKHYRMRAEFRIWHEGGEMFYAMFEKGQKASGASMIRCDRFEAASEAVNRLMPELIAAAAQSPELKKRWYAVEFLSTLSGEMLVTMIYHKRLDAEWMQAAQALQQQLDISVIGRSRGQKIVLKQDYVTETLKVGNRDFRYRQIEGSFTQPNAAVCQKMLEWACRTAEGLGSDLLELYCGNGNFTLPLSRYFRQVLATEISKTSVSAAQWNIEANRIGNIKIARLSAEEFTEAYTGKREFKRLKDGGIALTDYAFSTIFVDPPRAGIDEETLKLVSQFDNIIYISCNPETLRANLDTLAETHAVERAALFDQFPFTHHIESGVLLKKKIL.

The S-adenosyl-L-methionine site is built by Gln-182, Tyr-210, Asn-215, Glu-231, and Asp-293. The active-site Nucleophile is Cys-318. Glu-352 (proton acceptor) is an active-site residue.

Belongs to the class I-like SAM-binding methyltransferase superfamily. RNA M5U methyltransferase family. TrmA subfamily.

The enzyme catalyses uridine(54) in tRNA + S-adenosyl-L-methionine = 5-methyluridine(54) in tRNA + S-adenosyl-L-homocysteine + H(+). It carries out the reaction uridine(341) in tmRNA + S-adenosyl-L-methionine = 5-methyluridine(341) in tmRNA + S-adenosyl-L-homocysteine + H(+). In terms of biological role, dual-specificity methyltransferase that catalyzes the formation of 5-methyluridine at position 54 (m5U54) in all tRNAs, and that of position 341 (m5U341) in tmRNA (transfer-mRNA). This is tRNA/tmRNA (uracil-C(5))-methyltransferase from Neisseria meningitidis serogroup B (strain ATCC BAA-335 / MC58).